A 191-amino-acid chain; its full sequence is Fe/S biogenesis protein NfuA (191 aa).

Residues C149 and C152 each coordinate [4Fe-4S] cluster.

This sequence belongs to the NfuA family. Homodimer. [4Fe-4S] cluster serves as cofactor.

In terms of biological role, involved in iron-sulfur cluster biogenesis. Binds a 4Fe-4S cluster, can transfer this cluster to apoproteins, and thereby intervenes in the maturation of Fe/S proteins. Could also act as a scaffold/chaperone for damaged Fe/S proteins. This chain is Fe/S biogenesis protein NfuA, found in Edwardsiella ictaluri (strain 93-146).